We begin with the raw amino-acid sequence, 572 residues long: MFRPRFEPMNLPKDSNKPSTLMVLADRLNFISCAEGSSKYASKLFEGTLIDAEIMTNRARIEDLERRNRAAKAALEQLENMSATVPVHVSSALQTIEYPLETVIDVLDDLAQRAVQEKDIVGSYKTLDIRAPGEDVPANVIWIVKNGEPLTFNTDFQVDFLTTSFAIAGNGRLGFGSWFRALQTQLLDNNKAIARVLNVMGDTRISGRFMKTAIRALRSAMEIYAGTRQYSGFEATVLCLLHYSRSRQSASNIRHGLDVSIFEDALRHVPTYLNYMLEDIRAEWGSVTFSFDRSKLPVNFFSPIDGRKYSNGVFDPHIVYQLLKRTGTLSTTVRDITKETLLPIDPDFVRFDDPIAALSISFFPSRRTPLILHEDDPLVRTVIDSISLLLVLQKLMFNSNVYTSTHLNRFQPSAFFELPLGTQSEQEAAKWPVAPGSRPQATASTFDDNGQDMASRDNNLFFLFEKYVVPMYRYDNRCEVTGFFPGLAALCITGRVKGIPTAVRLGEYYSSLCNLIELDLRKTSHVGSGAAAVLAVHDSLTGDVEEGVSRLLEVFDAKKAFERNIEDIQRGV.

Residues 1-58 (MFRPRFEPMNLPKDSNKPSTLMVLADRLNFISCAEGSSKYASKLFEGTLIDAEIMTNR) are interaction with major capsid protein/MCP.

Belongs to the herpesviridae CVC2 protein family. As to quaternary structure, heterodimerizes with CVC1. Interacts with major capsid protein/MCP and triplex capsid protein 1/TRX1 at the pentamer vertices. Interacts with the large tegument protein/LTP.

Its subcellular location is the virion. The protein localises to the host nucleus. In terms of biological role, capsid vertex-specific component that plays a role during viral DNA encapsidation, assuring correct genome cleavage and presumably stabilizing capsids that contain full-length viral genomes. Participates in the interaction between the capsid and the tegument through interaction with the large tegument protein/LTP. In Infectious laryngotracheitis virus (strain Thorne V882) (ILTV), this protein is Capsid vertex component 2.